The chain runs to 780 residues: Exocyst complex component 3-like protein (780 aa).

This sequence belongs to the SEC6 family.

It localises to the cytoplasmic vesicle. It is found in the secretory vesicle. As part of the exocyst, may play a role in regulated exocytosis. This chain is Exocyst complex component 3-like protein (exoc3l1), found in Danio rerio (Zebrafish).